A 348-amino-acid polypeptide reads, in one-letter code: Methylthioribose-1-phosphate isomerase (348 aa).

Substrate-binding positions include 54–56, R96, and Q199; that span reads RGA. Residue D240 is the Proton donor of the active site. 250-251 provides a ligand contact to substrate; it reads NK.

Belongs to the eIF-2B alpha/beta/delta subunits family. MtnA subfamily.

The catalysed reaction is 5-(methylsulfanyl)-alpha-D-ribose 1-phosphate = 5-(methylsulfanyl)-D-ribulose 1-phosphate. The protein operates within amino-acid biosynthesis; L-methionine biosynthesis via salvage pathway; L-methionine from S-methyl-5-thio-alpha-D-ribose 1-phosphate: step 1/6. Its function is as follows. Catalyzes the interconversion of methylthioribose-1-phosphate (MTR-1-P) into methylthioribulose-1-phosphate (MTRu-1-P). This Thioalkalivibrio sulfidiphilus (strain HL-EbGR7) protein is Methylthioribose-1-phosphate isomerase.